The chain runs to 443 residues: D-aminoacyl-tRNA deacylase (443 aa).

The protein belongs to the DtdA deacylase family. Monomer. Zn(2+) is required as a cofactor.

The enzyme catalyses a D-aminoacyl-tRNA + H2O = a tRNA + a D-alpha-amino acid + H(+). The catalysed reaction is glycyl-tRNA(Ala) + H2O = tRNA(Ala) + glycine + H(+). In terms of biological role, D-aminoacyl-tRNA deacylase with broad substrate specificity. By recycling D-aminoacyl-tRNA to D-amino acids and free tRNA molecules, this enzyme counteracts the toxicity associated with the formation of D-aminoacyl-tRNA entities in vivo. This chain is D-aminoacyl-tRNA deacylase, found in Methanocorpusculum labreanum (strain ATCC 43576 / DSM 4855 / Z).